The chain runs to 117 residues: G antigen 12H (117 aa).

Positions 1–117 are disordered; the sequence is MSWRGRSTYY…PEEGEKQSQC (117 aa). Acidic residues-rich tracts occupy residues 32–45 and 87–96; these read FSDE…EEGE and ECEDGPDGQE. The span at 103-117 shows a compositional bias: basic and acidic residues; the sequence is EEVKTPEEGEKQSQC.

Belongs to the GAGE family.

The sequence is that of G antigen 12H (GAGE12H) from Homo sapiens (Human).